Here is a 697-residue protein sequence, read N- to C-terminus: ATP-dependent zinc metalloprotease FtsH (697 aa).

Residues Met-1–Leu-23 form a disordered region. Residues Met-1 to Arg-29 lie on the Cytoplasmic side of the membrane. A helical membrane pass occupies residues Phe-30–Trp-50. Residues Thr-51 to Trp-158 are Periplasmic-facing. The helical transmembrane segment at Phe-159–Leu-179 threads the bilayer. Over Leu-180–Pro-697 the chain is Cytoplasmic. Gly-251–Thr-258 is a binding site for ATP. His-474 contributes to the Zn(2+) binding site. Glu-475 is an active-site residue. Residues His-478 and Asp-550 each coordinate Zn(2+). The segment at Gly-649–Pro-697 is disordered. A compositionally biased stretch (basic and acidic residues) spans Lys-662–Lys-672.

In the central section; belongs to the AAA ATPase family. The protein in the C-terminal section; belongs to the peptidase M41 family. Homohexamer. Zn(2+) serves as cofactor.

It localises to the cell inner membrane. In terms of biological role, acts as a processive, ATP-dependent zinc metallopeptidase for both cytoplasmic and membrane proteins. Plays a role in the quality control of integral membrane proteins. This Rhodothermus marinus (strain ATCC 43812 / DSM 4252 / R-10) (Rhodothermus obamensis) protein is ATP-dependent zinc metalloprotease FtsH.